A 209-amino-acid chain; its full sequence is Small ribosomal subunit protein uS3 (209 aa).

Positions 38 to 107 constitute a KH type-2 domain; the sequence is IRKFIKNKYY…RVVINIEEIK (70 aa).

Belongs to the universal ribosomal protein uS3 family. Part of the 30S ribosomal subunit. Forms a tight complex with proteins S10 and S14.

In terms of biological role, binds the lower part of the 30S subunit head. Binds mRNA in the 70S ribosome, positioning it for translation. The chain is Small ribosomal subunit protein uS3 from Thermotoga sp. (strain RQ2).